The sequence spans 318 residues: NADH-ubiquinone oxidoreductase chain 1 (318 aa).

9 helical membrane-spanning segments follow: residues 2–22 (FLMN…FLTL), 37–57 (PNIV…KLFI), 69–89 (LMFT…WIPM), 100–120 (LGVL…LWSG), 136–156 (VAQT…TMMM), 171–191 (HMWL…STLA), 206–226 (ELVS…FFMA), 253–273 (ELFT…FLWI), and 294–314 (LPLT…SAGI).

It belongs to the complex I subunit 1 family.

It is found in the mitochondrion inner membrane. It catalyses the reaction a ubiquinone + NADH + 5 H(+)(in) = a ubiquinol + NAD(+) + 4 H(+)(out). Functionally, core subunit of the mitochondrial membrane respiratory chain NADH dehydrogenase (Complex I) that is believed to belong to the minimal assembly required for catalysis. Complex I functions in the transfer of electrons from NADH to the respiratory chain. The immediate electron acceptor for the enzyme is believed to be ubiquinone. The protein is NADH-ubiquinone oxidoreductase chain 1 (MT-ND1) of Tolypeutes matacus (Southern three-banded armadillo).